Reading from the N-terminus, the 212-residue chain is MQAFTTLDGLVVPLDRANVDTDAIIPKQFLKSIKRAGFGPNLFDEWRYLDHGEPGMDPATRQPNPAFVLNLPRYAGASVLLARDNFGCGSSREHAPWALEDYGIRAIIAPSFADIFYNNCFKNGILPIVLDAAAVDRLFGECEASAGYRLKIDLEQQTVTTPGGEVLRFEVDAGRKHRLLNGLDDIGLTLLQADKIKAYEARRRQEAPWLFA.

It belongs to the LeuD family. LeuD type 1 subfamily. In terms of assembly, heterodimer of LeuC and LeuD.

It carries out the reaction (2R,3S)-3-isopropylmalate = (2S)-2-isopropylmalate. The protein operates within amino-acid biosynthesis; L-leucine biosynthesis; L-leucine from 3-methyl-2-oxobutanoate: step 2/4. Catalyzes the isomerization between 2-isopropylmalate and 3-isopropylmalate, via the formation of 2-isopropylmaleate. This chain is 3-isopropylmalate dehydratase small subunit, found in Thiobacillus denitrificans (strain ATCC 25259 / T1).